We begin with the raw amino-acid sequence, 141 residues long: MLSADEKQLILHAWEKVHTHQEDFGAEALERMFTVYPQTKTYFHHFDLHHGSEQIRRHGKKVVVALENAVHHMDNLSAALCKLSDLHAYNLRVDPVNFKLLSHCFHVVLAGHLGEEYSPQVHVAYDKFLAAVSDVLAEKYR.

Residues 1 to 141 (MLSADEKQLI…VSDVLAEKYR (141 aa)) enclose the Globin domain. Positions 58 and 87 each coordinate heme b.

This sequence belongs to the globin family. Heterotetramer of two alpha-D chains and two beta chains. Red blood cells.

Functionally, involved in oxygen transport from the lung to the various peripheral tissues. The protein is Hemoglobin subunit alpha-D (HBAD) of Phrynops hilarii (Snake-necked turtle).